Reading from the N-terminus, the 211-residue chain is Glycerol-3-phosphate acyltransferase (211 aa).

The next 5 membrane-spanning stretches (helical) occupy residues 5 to 25, 55 to 75, 85 to 105, 126 to 146, and 168 to 188; these read VILGLLALISYLLGSIPTGYL, GPGLVTFLVDVGKGLGAILVA, PVPAGWFEFVLLAIAFIAVLA, VLLALNAPTALATFGVFLVVL, and WFFTQSWPFVGFSVIAGAFVI.

Belongs to the PlsY family. In terms of assembly, probably interacts with PlsX.

Its subcellular location is the cell inner membrane. It carries out the reaction an acyl phosphate + sn-glycerol 3-phosphate = a 1-acyl-sn-glycero-3-phosphate + phosphate. Its pathway is lipid metabolism; phospholipid metabolism. Catalyzes the transfer of an acyl group from acyl-phosphate (acyl-PO(4)) to glycerol-3-phosphate (G3P) to form lysophosphatidic acid (LPA). This enzyme utilizes acyl-phosphate as fatty acyl donor, but not acyl-CoA or acyl-ACP. This chain is Glycerol-3-phosphate acyltransferase, found in Thermosynechococcus vestitus (strain NIES-2133 / IAM M-273 / BP-1).